The primary structure comprises 138 residues: Small ribosomal subunit protein uS11c (138 aa).

Residues 1 to 22 (MAKPILRIGSRKNTRSGSRKNV) form a disordered region. Residues 9–22 (GSRKNTRSGSRKNV) show a composition bias toward basic residues.

It belongs to the universal ribosomal protein uS11 family. In terms of assembly, part of the 30S ribosomal subunit.

The protein localises to the plastid. Its subcellular location is the chloroplast. This is Small ribosomal subunit protein uS11c from Arabis hirsuta (Hairy rock-cress).